Here is a 982-residue protein sequence, read N- to C-terminus: Glycine dehydrogenase (decarboxylating) (982 aa).

Position 721 is an N6-(pyridoxal phosphate)lysine (lysine 721).

Belongs to the GcvP family. In terms of assembly, the glycine cleavage system is composed of four proteins: P, T, L and H. Pyridoxal 5'-phosphate serves as cofactor.

It carries out the reaction N(6)-[(R)-lipoyl]-L-lysyl-[glycine-cleavage complex H protein] + glycine + H(+) = N(6)-[(R)-S(8)-aminomethyldihydrolipoyl]-L-lysyl-[glycine-cleavage complex H protein] + CO2. Its function is as follows. The glycine cleavage system catalyzes the degradation of glycine. The P protein binds the alpha-amino group of glycine through its pyridoxal phosphate cofactor; CO(2) is released and the remaining methylamine moiety is then transferred to the lipoamide cofactor of the H protein. The protein is Glycine dehydrogenase (decarboxylating) of Prochlorococcus marinus (strain MIT 9303).